The chain runs to 87 residues: MAHKKGSGSTKNGRDSRSQRLGIKKYGGESVIIGNIIIRQRGSQFKPGVNVKLGKDDTLFALANGKVIFKKKKKKHTIVNVIENILQ.

The interval 1–20 (MAHKKGSGSTKNGRDSRSQR) is disordered.

The protein belongs to the bacterial ribosomal protein bL27 family.

The protein localises to the plastid. It is found in the chloroplast. This is Large ribosomal subunit protein bL27c from Gracilaria tenuistipitata var. liui (Red alga).